The sequence spans 218 residues: 3,4-dihydroxy-2-butanone 4-phosphate synthase (218 aa).

D-ribulose 5-phosphate is bound by residues 38–39, Asp43, 151–155, and Glu175; these read RE and RRGHT. Glu39 is a Mg(2+) binding site. His154 contacts Mg(2+).

The protein belongs to the DHBP synthase family. Homodimer. The cofactor is Mg(2+). Mn(2+) serves as cofactor.

It carries out the reaction D-ribulose 5-phosphate = (2S)-2-hydroxy-3-oxobutyl phosphate + formate + H(+). Its pathway is cofactor biosynthesis; riboflavin biosynthesis; 2-hydroxy-3-oxobutyl phosphate from D-ribulose 5-phosphate: step 1/1. In terms of biological role, catalyzes the conversion of D-ribulose 5-phosphate to formate and 3,4-dihydroxy-2-butanone 4-phosphate. This Shewanella frigidimarina (strain NCIMB 400) protein is 3,4-dihydroxy-2-butanone 4-phosphate synthase.